The chain runs to 379 residues: Cytochrome b (379 aa).

4 helical membrane-spanning segments follow: residues phenylalanine 33–methionine 53, tryptophan 77–valine 98, tryptophan 113–leucine 133, and phenylalanine 178–leucine 198. Histidine 83 and histidine 97 together coordinate heme b. 2 residues coordinate heme b: histidine 182 and histidine 196. Residue histidine 201 participates in a ubiquinone binding. 4 helical membrane-spanning segments follow: residues isoleucine 226 to phenylalanine 246, leucine 288 to asparagine 308, valine 320 to glycine 340, and phenylalanine 347 to proline 367.

This sequence belongs to the cytochrome b family. The cytochrome bc1 complex contains 11 subunits: 3 respiratory subunits (MT-CYB, CYC1 and UQCRFS1), 2 core proteins (UQCRC1 and UQCRC2) and 6 low-molecular weight proteins (UQCRH/QCR6, UQCRB/QCR7, UQCRQ/QCR8, UQCR10/QCR9, UQCR11/QCR10 and a cleavage product of UQCRFS1). This cytochrome bc1 complex then forms a dimer. It depends on heme b as a cofactor.

Its subcellular location is the mitochondrion inner membrane. In terms of biological role, component of the ubiquinol-cytochrome c reductase complex (complex III or cytochrome b-c1 complex) that is part of the mitochondrial respiratory chain. The b-c1 complex mediates electron transfer from ubiquinol to cytochrome c. Contributes to the generation of a proton gradient across the mitochondrial membrane that is then used for ATP synthesis. In Akodon subfuscus (Puno grass mouse), this protein is Cytochrome b (MT-CYB).